We begin with the raw amino-acid sequence, 204 residues long: Large ribosomal subunit protein eL15 (204 aa).

Belongs to the eukaryotic ribosomal protein eL15 family. As to quaternary structure, component of the large ribosomal subunit.

The protein resides in the cytoplasm. Component of the large ribosomal subunit. The ribosome is a large ribonucleoprotein complex responsible for the synthesis of proteins in the cell. The chain is Large ribosomal subunit protein eL15 (rpl15) from Hypophthalmichthys nobilis (Bighead carp).